Consider the following 1334-residue polypeptide: Aldehyde oxidase 3 (1334 aa).

The 2Fe-2S ferredoxin-type domain occupies Asp8–Ile95. Residues Cys47, Cys52, Cys55, and Cys77 each contribute to the [2Fe-2S] cluster site. Gln116 lines the Mo-molybdopterin pocket. [2Fe-2S] cluster contacts are provided by Cys117, Cys120, Cys152, and Cys154. Positions Phe236 to Lys421 constitute an FAD-binding PCMH-type domain. Leu264–Leu271 provides a ligand contact to FAD. Ser320 carries the post-translational modification Phosphoserine. The FAD site is built by Ser354, His358, Asp367, and Leu411. Residues Gly801, Leu1042, and Gln1198 each coordinate Mo-molybdopterin. Glu1265 (proton acceptor; for azaheterocycle hydroxylase activity) is an active-site residue.

The protein belongs to the xanthine dehydrogenase family. In terms of assembly, homodimer. It depends on [2Fe-2S] cluster as a cofactor. Requires FAD as cofactor. The cofactor is Mo-molybdopterin.

It is found in the cytoplasm. It carries out the reaction an aldehyde + O2 + H2O = a carboxylate + H2O2 + H(+). In terms of biological role, oxidase with broad substrate specificity, oxidizing aromatic azaheterocycles, such as N1-methylnicotinamide and phthalazine, as well as aldehydes, such as benzaldehyde, retinal and pyridoxal. Plays a key role in the metabolism of xenobiotics and drugs containing aromatic azaheterocyclic substituents. Is probably involved in the regulation of reactive oxygen species homeostasis. Is a prominent source of superoxide generation via the one-electron reduction of molecular oxygen. Also catalyzes nitric oxide (NO) production; under anaerobic conditions, reduces nitrite to NO with NADH or aldehyde as electron donor, but under aerobic conditions, NADH is the preferred substrate. These reactions may be catalyzed by several isozymes. The sequence is that of Aldehyde oxidase 3 (Aox3) from Rattus norvegicus (Rat).